A 262-amino-acid polypeptide reads, in one-letter code: DNA repair protein RecO (262 aa).

It belongs to the RecO family.

In terms of biological role, involved in DNA repair and RecF pathway recombination. This chain is DNA repair protein RecO, found in Acidovorax ebreus (strain TPSY) (Diaphorobacter sp. (strain TPSY)).